The following is a 230-amino-acid chain: CRP-like protein Clp (230 aa).

Residue 18-139 (PSLALDAGTI…APKILYAIGV (122 aa)) coordinates a nucleoside 3',5'-cyclic phosphate. An HTH crp-type domain is found at 158-230 (LDVTDRIVRT…GKTVVLYGTR (73 aa)). Residues 190–209 (RQELARLVGCSREMAGRVLK) constitute a DNA-binding region (H-T-H motif).

As to quaternary structure, homodimer.

The protein localises to the cytoplasm. Allosterically inhibited by cyclic di-GMP (c-di-GMP), which binds to Clp and abolishes its ability to bind its target gene promoter. Functionally, global transcriptional regulator that regulates virulence factors production by activating or repressing the expression of a large set of genes in diffusible signal factor (DSF) pathway. In Xanthomonas oryzae pv. oryzae (strain MAFF 311018), this protein is CRP-like protein Clp (clp).